The chain runs to 249 residues: Coproheme decarboxylase (249 aa).

Residues R131, 145 to 149, H172, Q185, and S223 contribute to the Fe-coproporphyrin III site; that span reads YPMDK. The active site involves Y145.

It belongs to the ChdC family. Type 1 subfamily. It depends on Fe-coproporphyrin III as a cofactor.

It carries out the reaction Fe-coproporphyrin III + 2 H2O2 + 2 H(+) = heme b + 2 CO2 + 4 H2O. It catalyses the reaction Fe-coproporphyrin III + H2O2 + H(+) = harderoheme III + CO2 + 2 H2O. The enzyme catalyses harderoheme III + H2O2 + H(+) = heme b + CO2 + 2 H2O. The protein operates within porphyrin-containing compound metabolism; protoheme biosynthesis. Its function is as follows. Involved in coproporphyrin-dependent heme b biosynthesis. Catalyzes the decarboxylation of Fe-coproporphyrin III (coproheme) to heme b (protoheme IX), the last step of the pathway. The reaction occurs in a stepwise manner with a three-propionate intermediate. The chain is Coproheme decarboxylase from Shouchella clausii (strain KSM-K16) (Alkalihalobacillus clausii).